Here is a 131-residue protein sequence, read N- to C-terminus: Fumarate reductase subunit C (131 aa).

A run of 3 helical transmembrane segments spans residues 30 to 50 (EGTA…LFAL), 57 to 77 (WMGF…LITL), and 109 to 129 (IIKG…YVAL).

Belongs to the FrdC family. As to quaternary structure, part of an enzyme complex containing four subunits: a flavoprotein (FrdA), an iron-sulfur protein (FrdB), and two hydrophobic anchor proteins (FrdC and FrdD).

The protein resides in the cell inner membrane. Functionally, two distinct, membrane-bound, FAD-containing enzymes are responsible for the catalysis of fumarate and succinate interconversion; fumarate reductase is used in anaerobic growth, and succinate dehydrogenase is used in aerobic growth. Anchors the catalytic components of the fumarate reductase complex to the cell inner membrane, binds quinones. This Salmonella dublin (strain CT_02021853) protein is Fumarate reductase subunit C.